Consider the following 432-residue polypeptide: Transcriptional adapter 3 (432 aa).

Residue K21 forms a Glycyl lysine isopeptide (Lys-Gly) (interchain with G-Cter in SUMO2) linkage. The stretch at 40–69 (IEELDTLQLELETLLSSASRRLRVLEAETQ) forms a coiled coil. Positions 87 to 127 (ARDHELGAPPKHGKPKKQKLEGKTGHGPGPGPGRPKSKNVQ) are disordered. K129 participates in a covalent cross-link: Glycyl lysine isopeptide (Lys-Gly) (interchain with G-Cter in SUMO2). The disordered stretch occupies residues 272–319 (NIISPMEDSPIPDMSGKESGADGASTSPRNQNKPFSVPHTKSLESRIK). Phosphoserine is present on residues S280 and S298. Over residues 295–305 (ASTSPRNQNKP) the composition is skewed to polar residues. A coiled-coil region spans residues 367-407 (LLRLAKEEVSRQELRQRVRMADNEVMDAFRKIMAARQKKRT). At K418 the chain carries N6-acetyllysine.

The protein belongs to the NGG1 family. In terms of assembly, the PCAF complex is composed of a number of TBP-associated factors (TAFS), such as TAF5, TAF5L, TAF6, TAF6L, TAF9, TAF10 and TAF12, PCAF, and also PCAF-associated factors (PAFs), such as TADA2L/ADA2, TADA3L/ADA3 and SPT3. Interacts directly with TADA2L and PCAF and also with the high-risk HPV oncoprotein E6. Component of the STAGA transcription coactivator-HAT complex, at least composed of SUPT3H, GCN5L2, TAF5L, TAF6L, SUPT7L, TADA3L, TAD1L, TAF10, TAF12, TRRAP and TAF9. Component of the TFTC-HAT complex. Component of the ADA2A-containing complex (ATAC), composed of KAT14, KAT2A, TADA2L, TADA3L, ZZ3, MBIP, WDR5, YEATS2, CCDC101 and DR1.

Its subcellular location is the nucleus. Its function is as follows. Functions as a component of the PCAF complex. The PCAF complex is capable of efficiently acetylating histones in a nucleosomal context. The PCAF complex could be considered as the human version of the yeast SAGA complex. Also known as a coactivator for p53/TP53-dependent transcriptional activation. Component of the ATAC complex, a complex with histone acetyltransferase activity on histones H3 and H4. The polypeptide is Transcriptional adapter 3 (Tada3) (Rattus norvegicus (Rat)).